A 212-amino-acid polypeptide reads, in one-letter code: Large ribosomal subunit protein uL1 (212 aa).

The protein belongs to the universal ribosomal protein uL1 family. In terms of assembly, part of the 50S ribosomal subunit.

Binds directly to 23S rRNA. Probably involved in E site tRNA release. In terms of biological role, protein L1 is also a translational repressor protein, it controls the translation of its operon by binding to its mRNA. In Haloarcula marismortui (strain ATCC 43049 / DSM 3752 / JCM 8966 / VKM B-1809) (Halobacterium marismortui), this protein is Large ribosomal subunit protein uL1.